Consider the following 207-residue polypeptide: Small ribosomal subunit protein uS4 (207 aa).

The segment at 31-55 (KCKLDSKPGQHGRTSGARTSDYGTQ) is disordered. Positions 42-53 (GRTSGARTSDYG) are enriched in polar residues. Positions 97-160 (SRLDNVVYRM…KKQARIVEAL (64 aa)) constitute an S4 RNA-binding domain.

The protein belongs to the universal ribosomal protein uS4 family. As to quaternary structure, part of the 30S ribosomal subunit. Contacts protein S5. The interaction surface between S4 and S5 is involved in control of translational fidelity.

Its function is as follows. One of the primary rRNA binding proteins, it binds directly to 16S rRNA where it nucleates assembly of the body of the 30S subunit. In terms of biological role, with S5 and S12 plays an important role in translational accuracy. The sequence is that of Small ribosomal subunit protein uS4 from Burkholderia ambifaria (strain ATCC BAA-244 / DSM 16087 / CCUG 44356 / LMG 19182 / AMMD) (Burkholderia cepacia (strain AMMD)).